The chain runs to 245 residues: Terpene cyclase esdpB (245 aa).

7 helical membrane passes run 19–39, 48–68, 75–95, 112–132, 140–160, 177–197, and 208–228; these read MVASIFLISGTGWIVNYVTTI, SGVTLLSLCNNLAWETVFAVI, IAALVITVWLLVNIYVIYVSV, LPVVTLLGFVGFLTGHIALSM, LYWGGMICQVTLSASALGLLI, FIASSFGVPGLFVRAVYWPSA, and WLSGVFFLLDLSYGAIYYHIS.

Belongs to the paxB family.

Its subcellular location is the membrane. It participates in secondary metabolite biosynthesis; terpenoid biosynthesis. Terpene cyclase; part of the cluster that mediates the biosynthesis of shearones, diterpenoid pyrones (DPs) which are structurally diverse meroterpenoids consisting of a diterpene linked by a pyrone, and which may exhibit a range of bioactivities. Within the pathway, esdpB takes part to the biosynthesis of the molecular scaffold by catalyzing the cyclization of the prenyl group initiated by protonation and ring-opening of the epoxide to produce the diterpenoid pyrone scaffold. The molecular scaffold is commonly biosynthesized by a series of enzymes including the non-reducing polyketide synthase (NR-PKS) esdpA that generates an alpha-pyrone; the prenyltransferase esdpC that attaches a geranylgeranyl pyrophosphate (GGPP) produced by the GGPP synthase (GGPPS) esdpD onto the pyrone unit; the FAD-dependent monooxygenase esdpE that converts an olefin on the diterpene unit into an epoxide; and the terpene cyclase esdpB that catalyzes the cyclization reactions to give the molecular backbone shearone A. In the modification steps, esdpF oxidizes the hydroxy group to a ketone at C-3 and esdpG then attaches hydroxy groups at both C-11 and C-12. After that, esdpI hydroxylates at C-20 and esdpH hydroxylates at C-6'. The ether bridge is generated by nucleophilic attack of the hydroxy group at C-20 to the carbonyl carbon at C-3. EsdpH can also functions prior to esdpI. The different combinations of these modification enzymes lead to the production of diverse shearone derivatives, shearone I being the end product of the pathway. The alpha-ketoglutarate-dependent dioxygenase esdpJ seems not to be involved in this pathway. This chain is Terpene cyclase esdpB, found in Penicillium shearii (Eupenicillium shearii).